We begin with the raw amino-acid sequence, 130 residues long: Small ribosomal subunit protein bS6 (130 aa).

Positions 100–130 (SPMVKAKDERRERREDFAEAGDDVEAGDSEE) are disordered. The span at 104 to 116 (KAKDERRERREDF) shows a compositional bias: basic and acidic residues. The segment covering 117–130 (AEAGDDVEAGDSEE) has biased composition (acidic residues).

The protein belongs to the bacterial ribosomal protein bS6 family.

Its function is as follows. Binds together with bS18 to 16S ribosomal RNA. This chain is Small ribosomal subunit protein bS6, found in Pectobacterium atrosepticum (strain SCRI 1043 / ATCC BAA-672) (Erwinia carotovora subsp. atroseptica).